Here is a 334-residue protein sequence, read N- to C-terminus: Thiamine-binding periplasmic protein (334 aa).

The N-terminal stretch at 1 to 23 is a signal peptide; the sequence is MRLLSLLTFSLFAVIGLAPAAQA. Thiamine-binding positions include 64–65, 166–167, W202, and 220–223; these read DG, AT, and YTTS.

Belongs to the bacterial solute-binding protein 1 family. The complex is composed of two ATP-binding proteins (ThiQ), two transmembrane proteins (ThiP) and a solute-binding protein (ThiB).

The protein localises to the periplasm. Part of the ABC transporter complex ThiBPQ involved in thiamine import. The sequence is that of Thiamine-binding periplasmic protein (thiB) from Brucella suis biovar 1 (strain 1330).